Here is a 370-residue protein sequence, read N- to C-terminus: Accessory Sec system protein translocase subunit SecY2 (370 aa).

The next 9 membrane-spanning stretches (helical) occupy residues 17-37 (IIFTCWILLIYIFGTHIPAIT), 65-85 (VFSLGLGPWLTAMIFMTLFYY), 105-125 (IFTLILALIQAYFVVFTLLSH), 134-154 (WLIILVLVTGAMILVWLSDLN), 155-175 (MRFGIAGPMPIVMISIIRSIM), 188-208 (LLISAALVLIIILLVLIFIEI), 240-260 (IAIMISFAAFFVLNSAVNLIV), 276-296 (FSTPIGITIFLILQLVLSYGI), and 339-359 (WIGAFIVTIIIGIPLYATLLI).

It belongs to the SecY/SEC61-alpha family. SecY2 subfamily. As to quaternary structure, component of the accessory SecA2/SecY2 protein translocase complex required to export cell wall proteins. May form heterotrimers with SecE and SecG subunits.

It is found in the cell membrane. Its function is as follows. Part of the accessory SecA2/SecY2 system specifically required for export of possible cell wall proteins. The central subunit of a protein translocation channel. The sequence is that of Accessory Sec system protein translocase subunit SecY2 from Staphylococcus carnosus (strain TM300).